A 250-amino-acid chain; its full sequence is Copper homeostasis protein cutC homolog (250 aa).

The protein belongs to the CutC family.

Involved in copper homeostasis. Affects body morphology and length, egg laying and brood size. The polypeptide is Copper homeostasis protein cutC homolog (cutc-1) (Caenorhabditis elegans).